Here is a 205-residue protein sequence, read N- to C-terminus: Glycerol-3-phosphate acyltransferase (205 aa).

The next 5 helical transmembrane spans lie at 13–33 (LLAL…GLIL), 68–88 (LLLD…LWGY), 90–110 (ASLV…WLGF), 120–140 (IGVL…IWLA), and 147–167 (YSSL…WVLG).

Belongs to the PlsY family. As to quaternary structure, probably interacts with PlsX.

It localises to the cell inner membrane. It catalyses the reaction an acyl phosphate + sn-glycerol 3-phosphate = a 1-acyl-sn-glycero-3-phosphate + phosphate. The protein operates within lipid metabolism; phospholipid metabolism. Functionally, catalyzes the transfer of an acyl group from acyl-phosphate (acyl-PO(4)) to glycerol-3-phosphate (G3P) to form lysophosphatidic acid (LPA). This enzyme utilizes acyl-phosphate as fatty acyl donor, but not acyl-CoA or acyl-ACP. The polypeptide is Glycerol-3-phosphate acyltransferase (Agrobacterium fabrum (strain C58 / ATCC 33970) (Agrobacterium tumefaciens (strain C58))).